Here is a 59-residue protein sequence, read N- to C-terminus: UPF0391 membrane protein Geob_0344 (59 aa).

2 helical membrane-spanning segments follow: residues Trp4–Ala24 and Phe33–Gly53.

Belongs to the UPF0391 family.

Its subcellular location is the cell membrane. The polypeptide is UPF0391 membrane protein Geob_0344 (Geotalea daltonii (strain DSM 22248 / JCM 15807 / FRC-32) (Geobacter daltonii)).